Reading from the N-terminus, the 370-residue chain is DNA replication and repair protein RecF (370 aa).

30–37 (GENAQGKT) lines the ATP pocket.

This sequence belongs to the RecF family.

The protein resides in the cytoplasm. The RecF protein is involved in DNA metabolism; it is required for DNA replication and normal SOS inducibility. RecF binds preferentially to single-stranded, linear DNA. It also seems to bind ATP. This is DNA replication and repair protein RecF from Listeria innocua serovar 6a (strain ATCC BAA-680 / CLIP 11262).